Reading from the N-terminus, the 193-residue chain is dCTP deaminase (193 aa).

Residues 110 to 115, D128, 136 to 138, Y171, K178, and Q182 contribute to the dCTP site; these read RSSLAR and VLE. E138 acts as the Proton donor/acceptor in catalysis. Positions 169 to 193 are disordered; that stretch reads RPYNRREDAKYRNQQGAVASRIDKD.

Belongs to the dCTP deaminase family. Homotrimer.

The catalysed reaction is dCTP + H2O + H(+) = dUTP + NH4(+). Its pathway is pyrimidine metabolism; dUMP biosynthesis; dUMP from dCTP (dUTP route): step 1/2. Functionally, catalyzes the deamination of dCTP to dUTP. This is dCTP deaminase from Sodalis glossinidius (strain morsitans).